The following is a 490-amino-acid chain: RNA-binding protein P (490 aa).

Residues 1-112 form a disordered region; that stretch reads MGKKRKLDSK…EEEEAAERDA (112 aa). A compositionally biased stretch (low complexity) spans 13–36; the sequence is AAARSAAARAAAAAAAAAAAAAVA. Positions 74–108 are enriched in acidic residues; the sequence is GGEEEEVEEVEVEEEVEVDEDEDGEGEGEEEEEAA. RRM domains lie at 156–233 and 267–343; these read RKIF…LASV and RKIF…QKAI.

Forms homodimers. Interacts with RBP-L and RBP-208. Interacts with NSF.

The protein resides in the nucleus. It localises to the cytoplasm. Its function is as follows. RNA-binding protein that binds to a cis-localization element or zipcode, within the 5'-CDS of prolamine RNA. Binds strongly to glutelin mRNA, particularly to 3'-UTR and zipcode RNA. Recognizes and binds to glutelin zipcode RNA, which is required for proper mRNA localization to cisternal endoplasmic reticulum. Exhibits strong binding activity to a glutelin intron sequence and may participate in mRNA splicing. Required for the correct localization of glutelin and prolamine mRNA in endosperm cells during grain development. RBP-P and RBP-L form a quaternary complex with the membrane trafficking factors NSF and RAB5A. This quaternay complex carries glutelin mRNAs for active transport on endosomes to the cortical endoplasmic reticulum membrane, and enables endosome-mediated glutelin mRNA transport in endosperm cells. This Oryza sativa subsp. japonica (Rice) protein is RNA-binding protein P.